A 462-amino-acid polypeptide reads, in one-letter code: Argininosuccinate lyase (462 aa).

This sequence belongs to the lyase 1 family. Argininosuccinate lyase subfamily.

The protein localises to the cytoplasm. It catalyses the reaction 2-(N(omega)-L-arginino)succinate = fumarate + L-arginine. Its pathway is amino-acid biosynthesis; L-arginine biosynthesis; L-arginine from L-ornithine and carbamoyl phosphate: step 3/3. The protein is Argininosuccinate lyase of Bacillus cytotoxicus (strain DSM 22905 / CIP 110041 / 391-98 / NVH 391-98).